The chain runs to 189 residues: B3 domain-containing protein At2g32645 (189 aa).

Positions 33-133 form a DNA-binding region, TF-B3; the sequence is FNQVKTPDFL…KLCFALTPKI (101 aa).

It localises to the nucleus. The protein is B3 domain-containing protein At2g32645 of Arabidopsis thaliana (Mouse-ear cress).